The chain runs to 205 residues: Coatomer subunit zeta-2 (205 aa).

Positions 1–12 (MQRPEAWPRPHP) are enriched in basic and acidic residues. The disordered stretch occupies residues 1–33 (MQRPEAWPRPHPGEGASAAQAGGAAPPTRATEQ). Over residues 13–30 (GEGASAAQAGGAAPPTRA) the composition is skewed to low complexity.

The protein belongs to the adaptor complexes small subunit family. As to quaternary structure, oligomeric complex.

Its subcellular location is the cytoplasm. It localises to the cytosol. The protein localises to the endoplasmic reticulum-Golgi intermediate compartment membrane. It is found in the golgi apparatus membrane. The protein resides in the cytoplasmic vesicle. Its subcellular location is the COPI-coated vesicle membrane. The coatomer is a cytosolic protein complex that binds to dilysine motifs and reversibly associates with Golgi non-clathrin-coated vesicles, which further mediate biosynthetic protein transport from the ER, via the Golgi up to the trans Golgi network. Coatomer complex is required for budding from Golgi membranes, and is essential for the retrograde Golgi-to-ER transport of dilysine-tagged proteins. The zeta subunit may be involved in regulating the coat assembly and, hence, the rate of biosynthetic protein transport due to its association-dissociation properties with the coatomer complex. The sequence is that of Coatomer subunit zeta-2 (Copz2) from Mus musculus (Mouse).